We begin with the raw amino-acid sequence, 311 residues long: Porphobilinogen deaminase (311 aa).

Cys242 carries the S-(dipyrrolylmethanemethyl)cysteine modification.

The protein belongs to the HMBS family. As to quaternary structure, monomer. The cofactor is dipyrromethane.

The catalysed reaction is 4 porphobilinogen + H2O = hydroxymethylbilane + 4 NH4(+). Its pathway is porphyrin-containing compound metabolism; protoporphyrin-IX biosynthesis; coproporphyrinogen-III from 5-aminolevulinate: step 2/4. In terms of biological role, tetrapolymerization of the monopyrrole PBG into the hydroxymethylbilane pre-uroporphyrinogen in several discrete steps. This Baumannia cicadellinicola subsp. Homalodisca coagulata protein is Porphobilinogen deaminase.